We begin with the raw amino-acid sequence, 134 residues long: uncharacterized protein (134 aa).

This is an uncharacterized protein from Streptomyces coelicolor (strain ATCC BAA-471 / A3(2) / M145).